A 489-amino-acid chain; its full sequence is UDP-N-acetylmuramoylalanine--D-glutamate ligase (489 aa).

126 to 132 (GTNGKTT) provides a ligand contact to ATP.

The protein belongs to the MurCDEF family.

Its subcellular location is the cytoplasm. The catalysed reaction is UDP-N-acetyl-alpha-D-muramoyl-L-alanine + D-glutamate + ATP = UDP-N-acetyl-alpha-D-muramoyl-L-alanyl-D-glutamate + ADP + phosphate + H(+). Its pathway is cell wall biogenesis; peptidoglycan biosynthesis. Its function is as follows. Cell wall formation. Catalyzes the addition of glutamate to the nucleotide precursor UDP-N-acetylmuramoyl-L-alanine (UMA). The protein is UDP-N-acetylmuramoylalanine--D-glutamate ligase of Mycobacterium avium (strain 104).